Consider the following 307-residue polypeptide: Porphobilinogen deaminase (307 aa).

The residue at position 239 (Cys239) is an S-(dipyrrolylmethanemethyl)cysteine.

Belongs to the HMBS family. Monomer. It depends on dipyrromethane as a cofactor.

The catalysed reaction is 4 porphobilinogen + H2O = hydroxymethylbilane + 4 NH4(+). The protein operates within porphyrin-containing compound metabolism; protoporphyrin-IX biosynthesis; coproporphyrinogen-III from 5-aminolevulinate: step 2/4. In terms of biological role, tetrapolymerization of the monopyrrole PBG into the hydroxymethylbilane pre-uroporphyrinogen in several discrete steps. This Campylobacter jejuni subsp. jejuni serotype O:23/36 (strain 81-176) protein is Porphobilinogen deaminase.